The sequence spans 122 residues: Large ribosomal subunit protein uL14 (122 aa).

The protein belongs to the universal ribosomal protein uL14 family. As to quaternary structure, part of the 50S ribosomal subunit. Forms a cluster with proteins L3 and L19. In the 70S ribosome, L14 and L19 interact and together make contacts with the 16S rRNA in bridges B5 and B8.

Functionally, binds to 23S rRNA. Forms part of two intersubunit bridges in the 70S ribosome. This Sinorhizobium fredii (strain NBRC 101917 / NGR234) protein is Large ribosomal subunit protein uL14.